Reading from the N-terminus, the 492-residue chain is Probable endopolygalacturonase D (492 aa).

The N-terminal stretch at 1–16 (MKRSALILSFLPLVFG) is a signal peptide. A disulfide bridge links Cys151 with Cys166. PbH1 repeat units follow at residues 216-238 (GTSVTITGVEGHVIDGNGAAYWD), 258-280 (MYNSRIENLYIQNWPVHCFEIES), 281-319 (TEHLTVSGLTLNNSAGDAANSKSDGDPAAHNSDGFDIKE), and 320-341 (SSYFTLENTWVHNQDDCVAVTS). Asn292 carries N-linked (GlcNAc...) asparagine glycosylation. Asp334 functions as the Proton donor in the catalytic mechanism. Cys336 and Cys352 are joined by a disulfide. Residue His356 is part of the active site. PbH1 repeat units follow at residues 371 to 392 (VNGVTFSNSQVISSQNGCRIKT), 400 to 422 (VYNIRYENITLSDISDYGIDVQQ), and 434 to 478 (TNGV…SITG). N-linked (GlcNAc...) asparagine glycosylation is found at Asn407 and Asn441. 2 cysteine pairs are disulfide-bonded: Cys461–Cys466 and Cys484–Cys491.

Belongs to the glycosyl hydrolase 28 family.

The protein localises to the secreted. It catalyses the reaction (1,4-alpha-D-galacturonosyl)n+m + H2O = (1,4-alpha-D-galacturonosyl)n + (1,4-alpha-D-galacturonosyl)m.. In terms of biological role, involved in maceration and soft-rotting of plant tissue. Hydrolyzes the 1,4-alpha glycosidic bonds of de-esterified pectate in the smooth region of the plant cell wall. This chain is Probable endopolygalacturonase D (pgaD), found in Aspergillus flavus (strain ATCC 200026 / FGSC A1120 / IAM 13836 / NRRL 3357 / JCM 12722 / SRRC 167).